Here is a 119-residue protein sequence, read N- to C-terminus: V-type proton ATPase subunit F (119 aa).

Belongs to the V-ATPase F subunit family. V-ATPase is a heteromultimeric enzyme made up of two complexes: the ATP-hydrolytic V1 complex and the proton translocation V0 complex. The V1 complex consists of three catalytic AB heterodimers that form a heterohexamer, three peripheral stalks each consisting of EG heterodimers, one central rotor including subunits D and F, and the regulatory subunits C and H. The proton translocation complex V0 consists of the proton transport subunit a, a ring of proteolipid subunits c9c'', rotary subunit d, subunits e and f, and the accessory subunits ATP6AP1/Ac45 and ATP6AP2/PRR.

It localises to the cytoplasmic vesicle. It is found in the secretory vesicle. The protein localises to the synaptic vesicle membrane. Its subcellular location is the clathrin-coated vesicle membrane. Functionally, subunit of the V1 complex of vacuolar(H+)-ATPase (V-ATPase), a multisubunit enzyme composed of a peripheral complex (V1) that hydrolyzes ATP and a membrane integral complex (V0) that translocates protons. V-ATPase is responsible for acidifying and maintaining the pH of intracellular compartments and in some cell types, is targeted to the plasma membrane, where it is responsible for acidifying the extracellular environment. The sequence is that of V-type proton ATPase subunit F (ATP6V1F) from Homo sapiens (Human).